A 352-amino-acid chain; its full sequence is Isopentenyl-diphosphate delta-isomerase (352 aa).

Residue 6–7 (RK) coordinates substrate. FMN contacts are provided by residues 63–65 (AMT), serine 93, and asparagine 122. 93-95 (SQR) is a substrate binding site. Glutamine 160 lines the substrate pocket. Glutamate 161 serves as a coordination point for Mg(2+). FMN contacts are provided by residues lysine 192, threonine 221, 271 to 273 (GIR), and 292 to 293 (SQ).

This sequence belongs to the IPP isomerase type 2 family. As to quaternary structure, homooctamer. Dimer of tetramers. The cofactor is FMN. NADPH is required as a cofactor. Requires Mg(2+) as cofactor.

The protein localises to the cytoplasm. The catalysed reaction is isopentenyl diphosphate = dimethylallyl diphosphate. In terms of biological role, involved in the biosynthesis of isoprenoids. Catalyzes the 1,3-allylic rearrangement of the homoallylic substrate isopentenyl (IPP) to its allylic isomer, dimethylallyl diphosphate (DMAPP). The chain is Isopentenyl-diphosphate delta-isomerase from Pyrobaculum aerophilum (strain ATCC 51768 / DSM 7523 / JCM 9630 / CIP 104966 / NBRC 100827 / IM2).